Consider the following 146-residue polypeptide: Putative pre-16S rRNA nuclease (146 aa).

It belongs to the YqgF nuclease family.

The protein resides in the cytoplasm. Functionally, could be a nuclease involved in processing of the 5'-end of pre-16S rRNA. This is Putative pre-16S rRNA nuclease from Pseudomonas syringae pv. syringae (strain B728a).